Here is a 376-residue protein sequence, read N- to C-terminus: Phytanoyl-CoA hydroxylase-interacting protein-like (376 aa).

In terms of domain architecture, Fibronectin type-III spans 52–161 (VPHNIKISNI…EIIEFCTADY (110 aa)).

This sequence belongs to the PHYHIP family.

Its function is as follows. May play a role in the development of the central system. The polypeptide is Phytanoyl-CoA hydroxylase-interacting protein-like (phyhipl) (Xenopus tropicalis (Western clawed frog)).